The sequence spans 258 residues: Shikimate dehydrogenase (NADP(+)) (258 aa).

Residues 14-16 (SES) and threonine 61 contribute to the shikimate site. Lysine 65 (proton acceptor) is an active-site residue. 2 residues coordinate shikimate: asparagine 86 and aspartate 101. Residues 125–129 (GSGGS) and leucine 211 each bind NADP(+). Tyrosine 213 contributes to the shikimate binding site. NADP(+) is bound at residue glycine 234.

The protein belongs to the shikimate dehydrogenase family. As to quaternary structure, homodimer.

The enzyme catalyses shikimate + NADP(+) = 3-dehydroshikimate + NADPH + H(+). Its pathway is metabolic intermediate biosynthesis; chorismate biosynthesis; chorismate from D-erythrose 4-phosphate and phosphoenolpyruvate: step 4/7. In terms of biological role, involved in the biosynthesis of the chorismate, which leads to the biosynthesis of aromatic amino acids. Catalyzes the reversible NADPH linked reduction of 3-dehydroshikimate (DHSA) to yield shikimate (SA). In Clostridium botulinum (strain ATCC 19397 / Type A), this protein is Shikimate dehydrogenase (NADP(+)).